Reading from the N-terminus, the 490-residue chain is Transcription factor lin-26 (490 aa).

Disordered regions lie at residues 96–176 (KYKD…PLHQ), 236–262 (TPEY…EPDS), and 302–326 (ASKP…KKHR). A PEST region spans residues 101–110 (SSSPESPSTT). Residues 101–120 (SSSPESPSTTASTAAQHTPP) are compositionally biased toward low complexity. Polar residues-rich tracts occupy residues 123–132 (AVSTPTSINT) and 151–176 (NLST…PLHQ). The span at 236 to 260 (TPEYDDNHHSETISKASSEDLKTEP) shows a compositional bias: basic and acidic residues. A C2H2-type; degenerate zinc finger spans residues 353-381 (YKCALCGKPTTLNSTGSRWNLLRHVIMIH).

Expressed in somatic gonads and germline precursors until the 50-cell stage. After the 100-cell stage, expression is seen in differentiating hypodermal and support cells (at protein level).

The protein resides in the nucleus. In terms of biological role, probable transcription factor. Required to specify the fates of hypodermal and neuron-associated support cells. Functions during vulval development, playing a role in vulval precursor cell fate specification. Positively modulates expression of homeobox protein lin-39, perhaps by binding to regulatory regions of the lin-39 gene, acting in the vulval lineage. The polypeptide is Transcription factor lin-26 (Caenorhabditis elegans).